A 709-amino-acid chain; its full sequence is Protein SOSEKI 3 (709 aa).

The interval 8-101 (SSVQVLYQLS…YVLRASELFD (94 aa)) is DIX-like oligomerization domain. Disordered stretches follow at residues 242–266 (LHTPAPRSLTSPTEPPFSPGSAKRM), 315–344 (RDGRSKSASPSSLNELREVQNEKEKEAEQS), 358–393 (GGSSKGKRTPQSTCEDPLPKSPEAKQMPRSRTKTPC), 411–439 (PSPAVDNKAHSSLDRQEIPPQEECKNRPS), and 506–560 (DSPT…DTKP). The span at 329-342 (ELREVQNEKEKEAE) shows a compositional bias: basic and acidic residues. The span at 417–436 (NKAHSSLDRQEIPPQEECKN) shows a compositional bias: basic and acidic residues. Residues 529–544 (VKTSNSLPRVKTTTSP) show a composition bias toward polar residues. The C2HC/C3H-type zinc-finger motif lies at 663–692 (ILQECSTCGRTFKPDSLQVHMRGCHPPQYA). The Zn(2+) site is built by Cys-667, Cys-670, His-682, and Cys-686.

The protein belongs to the SOSEKI family. Homodimer. Forms long polymer filaments with other SOKs proteins polymers crucial for polar localization and biological activity. The cofactor is Zn(2+).

It is found in the cell membrane. In terms of biological role, SOSEKI proteins locally interpret global polarity cues and can influence cell division orientation to coordinate cell polarization relative to body axes. The chain is Protein SOSEKI 3 from Physcomitrium patens (Spreading-leaved earth moss).